The primary structure comprises 250 residues: Probable transcriptional regulatory protein DP2908 (250 aa).

Belongs to the TACO1 family.

The protein resides in the cytoplasm. The protein is Probable transcriptional regulatory protein DP2908 of Desulfotalea psychrophila (strain LSv54 / DSM 12343).